Here is a 438-residue protein sequence, read N- to C-terminus: Adenylosuccinate synthetase (438 aa).

GTP is bound by residues 13-19 (GDEGKGK) and 41-43 (GHT). The Proton acceptor role is filled by D14. D14 and G41 together coordinate Mg(2+). IMP is bound by residues 14-17 (DEGK), 39-42 (NAGH), T130, R144, Q225, T240, and R310. Catalysis depends on H42, which acts as the Proton donor. Residue 306 to 312 (ATTGRLR) participates in substrate binding. GTP contacts are provided by residues R312, 338 to 340 (KLD), and 421 to 423 (STG).

Belongs to the adenylosuccinate synthetase family. Homodimer. It depends on Mg(2+) as a cofactor.

It is found in the cytoplasm. The catalysed reaction is IMP + L-aspartate + GTP = N(6)-(1,2-dicarboxyethyl)-AMP + GDP + phosphate + 2 H(+). It participates in purine metabolism; AMP biosynthesis via de novo pathway; AMP from IMP: step 1/2. In terms of biological role, plays an important role in the de novo pathway of purine nucleotide biosynthesis. Catalyzes the first committed step in the biosynthesis of AMP from IMP. This is Adenylosuccinate synthetase from Vibrio vulnificus (strain YJ016).